The primary structure comprises 404 residues: Histidinol dehydrogenase (404 aa).

Tyrosine 114, glutamine 176, and asparagine 199 together coordinate NAD(+). Residues serine 222, glutamine 244, and histidine 247 each coordinate substrate. The Zn(2+) site is built by glutamine 244 and histidine 247. Residues glutamate 300 and histidine 301 each act as proton acceptor in the active site. Positions 301, 334, 388, and 393 each coordinate substrate. Aspartate 334 contributes to the Zn(2+) binding site. Residue histidine 393 participates in Zn(2+) binding.

This sequence belongs to the histidinol dehydrogenase family. Requires Zn(2+) as cofactor.

The catalysed reaction is L-histidinol + 2 NAD(+) + H2O = L-histidine + 2 NADH + 3 H(+). Its pathway is amino-acid biosynthesis; L-histidine biosynthesis; L-histidine from 5-phospho-alpha-D-ribose 1-diphosphate: step 9/9. Catalyzes the sequential NAD-dependent oxidations of L-histidinol to L-histidinaldehyde and then to L-histidine. The sequence is that of Histidinol dehydrogenase (hisD) from Archaeoglobus fulgidus (strain ATCC 49558 / DSM 4304 / JCM 9628 / NBRC 100126 / VC-16).